Here is a 571-residue protein sequence, read N- to C-terminus: Chitin-inducible gibberellin-responsive protein 1 (571 aa).

The span at 61–77 shows a compositional bias: polar residues; it reads TNTPDNQSSTETISAQP. Disordered stretches follow at residues 61–80 and 151–180; these read TNTP…PISP and QRSR…YPTA. The GRAS domain maps to 192–571; that stretch reads ELREDPQIIV…RKLISASAWH (380 aa). The tract at residues 199–259 is leucine repeat I (LRI); that stretch reads IIVKQLLTRC…VARHGNSGTN (61 aa). The VHIID stretch occupies residues 278–343; sequence MRILYNICPY…GGPPRVRITG (66 aa). The VHIID signature appears at 309 to 313; that stretch reads IHIID. Residues 359-391 form a leucine repeat II (LRII) region; sequence IVGKMLKSMSEEFKIPLEFTPLSVYATQVTKEM. A PFYRE region spans residues 400–494; sequence LSVNFTLQLH…QHCLAKDIVN (95 aa). An SAW region spans residues 497 to 571; that stretch reads ACEGKDRVER…RKLISASAWH (75 aa).

It belongs to the GRAS family.

The protein localises to the nucleus. In terms of biological role, may play a regulatory role in the early step of oligosaccharide elicitor response, downstream of the membrane-associated high-affinity chitin-binding protein. This Oryza sativa subsp. japonica (Rice) protein is Chitin-inducible gibberellin-responsive protein 1 (CIGR1).